The primary structure comprises 354 residues: MNGTEGPDFYVPMVNTTGIVRSPYDYPQYYLVNPAAFSMLAAYMFFLILVGFPVNFLTLYVTMEHKKLRTPLNYILLNLAVANLFMVIGGFTTTMYTSMHGYFVLGRTGCNLEGFFATLGGEIALWSLVVLAVERWVVVCKPISNFRFGENHAVMGVSFTWLMACACSVPPLFGWSRYIPEGMQCSCGIDYYTRAPGYNNESFVIYMFVCHFSIPLTIIFFCYGRLLCAVKDAAAAQQESETTQRAEREVSRMVVIMVIGFLICWLPYASVAWFIFTHQGSEFGPVFMTIPAFFAKSSAIYNPMIYICMNKQFRHCMITTLCCGKNPFEEEEGASTTASKTEASSVSSSHVSPA.

At M1–A36 the chain is on the extracellular side. 2 N-linked (GlcNAc...) asparagine glycosylation sites follow: N2 and N15. Residues F37 to V61 traverse the membrane as a helical segment. Over T62–N73 the chain is Cytoplasmic. A helical membrane pass occupies residues Y74–Y96. Residues T97–C110 are Extracellular-facing. A disulfide bond links C110 and C187. The chain crosses the membrane as a helical span at residues N111–V133. The short motif at E134–W136 is the 'Ionic lock' involved in activated form stabilization element. At E134–H152 the chain is on the cytoplasmic side. A helical transmembrane segment spans residues A153 to F173. Over G174–S202 the chain is Extracellular. The helical transmembrane segment at F203–G224 threads the bilayer. At R225–R252 the chain is on the cytoplasmic side. Residues M253–F274 form a helical membrane-spanning segment. The Extracellular portion of the chain corresponds to I275–V286. A helical membrane pass occupies residues F287–C308. At K296 the chain carries N6-(retinylidene)lysine. At M309–A354 the chain is on the cytoplasmic side. 2 S-palmitoyl cysteine lipidation sites follow: C322 and C323. Residues G333 to A354 are disordered. The segment covering A334 to A354 has biased composition (low complexity).

The protein belongs to the G-protein coupled receptor 1 family. Opsin subfamily. Phosphorylated on some or all of the serine and threonine residues present in the C-terminal region. In terms of processing, contains one covalently linked retinal chromophore.

The protein resides in the membrane. It localises to the cell projection. It is found in the cilium. Its subcellular location is the photoreceptor outer segment. Photoreceptor required for image-forming vision at low light intensity. While most salt water fish species use retinal as chromophore, most freshwater fish use 3-dehydroretinal, or a mixture of retinal and 3-dehydroretinal. Light-induced isomerization of 11-cis to all-trans retinal triggers a conformational change that activates signaling via G-proteins. Subsequent receptor phosphorylation mediates displacement of the bound G-protein alpha subunit by arrestin and terminates signaling. In Zeus faber (John Dory), this protein is Rhodopsin (rho).